Consider the following 30-residue polypeptide: Trypsin inhibitor 3 (30 aa).

Intrachain disulfides connect Cys4-Cys21, Cys11-Cys23, and Cys17-Cys29.

Belongs to the protease inhibitor I7 (squash-type serine protease inhibitor) family.

Its subcellular location is the secreted. Inhibits trypsin. The polypeptide is Trypsin inhibitor 3 (Momordica charantia (Bitter gourd)).